We begin with the raw amino-acid sequence, 581 residues long: Transcription factor GTE2 (581 aa).

Positions 130–153 are disordered; sequence VKKTKTKKKKIGHGQKRSNPFATD. Residues 131–145 are compositionally biased toward basic residues; that stretch reads KKTKTKKKKIGHGQK. The Bromo domain occupies 169–275; it reads KVLKSMMTTC…SQFDVWFNPT (107 aa). Disordered regions lie at residues 329–399 and 470–581; these read PLLP…KREM and KRQG…KEAP. Positions 346 to 365 are enriched in pro residues; that stretch reads PSPPPSPVQPPPPPSPPPQP. In terms of domain architecture, NET spans 389–470; it reads PKAKDPNKRE…NYRKMASKIK (82 aa). Composition is skewed to basic and acidic residues over residues 390–399 and 493–503; these read KAKDPNKREM and SAEKRGRKGGE. A compositionally biased stretch (acidic residues) spans 504 to 517; the sequence is AGEEDVDIGEDIPV. A compositionally biased stretch (low complexity) spans 530-564; the sequence is TAAAASGGSSSSGSFSSSGSSSSSDSESGSSSGSD.

Its subcellular location is the nucleus. This Arabidopsis thaliana (Mouse-ear cress) protein is Transcription factor GTE2 (GTE2).